The primary structure comprises 58 residues: Large ribosomal subunit protein uL30 (58 aa).

It belongs to the universal ribosomal protein uL30 family. Part of the 50S ribosomal subunit.

The protein is Large ribosomal subunit protein uL30 of Erythrobacter litoralis (strain HTCC2594).